A 273-amino-acid chain; its full sequence is MHELLLFASVPAHQHHELLQQLAGLTAMQPRHRLERRLIFKAYRKPGLINTRVGASQDLQGNEMQRLNKMLNGGMFYTQVVGPVSEADFGAQSSAASSGDPDAPMSGTDTGTNFEYHPYSYENQPWKLEFRDIPEAGTRSAVTTRLMASASLPKGDITTPMNAWGYSFVTEYVVEGDVFILNDIVIYLHRVLHYPAESSGSHEPRRQLPPFQQMSPLEKTGSYVLQASIAVQDGGNQEMMKTASQHLFGLREQLKSAVRLEQADRLSLDTRAK.

Residues 90-106 show a composition bias toward low complexity; it reads GAQSSAASSGDPDAPMS. The segment at 90–114 is disordered; sequence GAQSSAASSGDPDAPMSGTDTGTNF.

It belongs to the Mediator complex subunit 18 family. In terms of assembly, component of the Mediator complex.

The protein localises to the nucleus. Its function is as follows. Component of the Mediator complex, a coactivator involved in the regulated transcription of nearly all RNA polymerase II-dependent genes. Mediator functions as a bridge to convey information from gene-specific regulatory proteins to the basal RNA polymerase II transcription machinery. Mediator is recruited to promoters by direct interactions with regulatory proteins and serves as a scaffold for the assembly of a functional preinitiation complex with RNA polymerase II and the general transcription factors. The sequence is that of Mediator of RNA polymerase II transcription subunit 18 (srb5) from Aspergillus oryzae (strain ATCC 42149 / RIB 40) (Yellow koji mold).